The chain runs to 605 residues: Insulin-like growth factor-binding protein complex acid labile subunit (605 aa).

Residues 1-27 form the signal peptide; sequence MALRKGGLALALLLLSWVALGPRSLEG. An LRRNT domain is found at 32–74; sequence TPGEAEGPACPAACVCSYDDDADELSVFCSSRNLTRLPDGVPG. 2 disulfide bridges follow: Cys-41-Cys-47 and Cys-45-Cys-60. 3 N-linked (GlcNAc...) asparagine glycosylation sites follow: Asn-64, Asn-85, and Asn-96. LRR repeat units follow at residues 75–96, 99–120, 123–144, 147–168, 171–192, 195–216, 219–240, 243–264, 267–288, 291–312, 315–336, 339–360, 363–384, 387–408, 411–432, 435–456, 459–480, 483–504, and 507–528; these read GTQA…AFQN, SLGF…ALLG, NLCH…TFAH, ALAS…LFEG, SLWD…AFRG, SLRE…LFSG, ELRE…VFVQ, RLQK…AFLG, ALRW…TFPG, GLRV…TFKD, FLEE…SFEG, QLEV…AFLG, NVAV…VFRG, KLHS…TFTG, GLRR…SLWG, ELLE…LFQG, KLEY…ALGP, RAFW…LLAP, and RLRY…PPGL. A glycan (N-linked (GlcNAc...) asparagine) is linked at Asn-368. N-linked (GlcNAc...) asparagine glycosylation occurs at Asn-515. The 70-residue stretch at 536 to 605 folds into the LRRCT domain; that stretch reads NPWDCGCPLK…DLSEAHFAPC (70 aa). Disulfide bonds link Cys-540–Cys-583, Cys-542–Cys-605, and Cys-566–Cys-571. Asn-580 carries N-linked (GlcNAc...) asparagine glycosylation.

As to quaternary structure, forms a ternary complex with IGF1 and IGFBP3. As to expression, plasma.

Its subcellular location is the secreted. It localises to the extracellular space. Its function is as follows. Involved in protein-protein interactions that result in protein complexes, receptor-ligand binding or cell adhesion. The protein is Insulin-like growth factor-binding protein complex acid labile subunit (IGFALS) of Homo sapiens (Human).